We begin with the raw amino-acid sequence, 577 residues long: Sulfite reductase [NADPH] hemoprotein beta-component (577 aa).

[4Fe-4S] cluster is bound by residues Cys-440, Cys-446, Cys-486, and Cys-490. Cys-490 is a siroheme binding site.

Belongs to the nitrite and sulfite reductase 4Fe-4S domain family. In terms of assembly, alpha(8)-beta(8). The alpha component is a flavoprotein, the beta component is a hemoprotein. The cofactor is siroheme. [4Fe-4S] cluster serves as cofactor.

The catalysed reaction is hydrogen sulfide + 3 NADP(+) + 3 H2O = sulfite + 3 NADPH + 4 H(+). It participates in sulfur metabolism; hydrogen sulfide biosynthesis; hydrogen sulfide from sulfite (NADPH route): step 1/1. In terms of biological role, component of the sulfite reductase complex that catalyzes the 6-electron reduction of sulfite to sulfide. This is one of several activities required for the biosynthesis of L-cysteine from sulfate. This chain is Sulfite reductase [NADPH] hemoprotein beta-component, found in Vibrio cholerae serotype O1 (strain ATCC 39315 / El Tor Inaba N16961).